We begin with the raw amino-acid sequence, 145 residues long: UI (145 aa).

The signal sequence occupies residues 1–22 (MKPVPLVLLITSVLLTTHIPLS). Val-143 is modified (valine amide).

This sequence belongs to the sauvagine/corticotropin-releasing factor/urotensin I family.

The protein localises to the secreted. Functionally, urotensin is found in the teleost caudal neurosecretory system. It has a suggested role in osmoregulation and as a corticotropin-releasing factor. The non-hormonal portion of this precursor may be a urotensin binding protein, urophysin. The sequence is that of UI from Carassius auratus (Goldfish).